Reading from the N-terminus, the 301-residue chain is Transcriptional activator protein NhaR (301 aa).

In terms of domain architecture, HTH lysR-type spans 6-63 (INYNHLYYFWHVYKEGSVVGAAEALYLTPQTITGQIRALEERLQGKLFKRKGRGLEPS). Residues 23–42 (VVGAAEALYLTPQTITGQIR) constitute a DNA-binding region (H-T-H motif).

Belongs to the LysR transcriptional regulatory family.

It is found in the cytoplasm. Its function is as follows. Plays a role in the positive regulation of NhaA. This chain is Transcriptional activator protein NhaR (nhaR), found in Escherichia coli (strain K12).